Reading from the N-terminus, the 1372-residue chain is Serine protease pic autotransporter (1372 aa).

Residues 1 to 55 (MNKVYSLKYCPVTGGLIAVSELARRVIKKTCRRLTHILLAGIPAICLCYSQISQA) form the signal peptide. The region spanning 56–301 (GIVRSDIAYQ…NVIPTDYLNQ (246 aa)) is the Peptidase S6 domain. Catalysis depends on charge relay system residues His127, Asp155, and Ser258. Residues 1106-1372 (DTNGDAGAWA…AVNANFRYMF (267 aa)) form the Autotransporter domain.

Post-translationally, cleaved to release the mature protein from the outer membrane.

The protein resides in the periplasm. It is found in the secreted. Its subcellular location is the cell surface. It localises to the cell outer membrane. In terms of biological role, involved in intestinal colonization, displays in vitro mucinolytic activity, serum resistance, and hemagglutination. Important to penetrate the intestinal mucus layer. The polypeptide is Serine protease pic autotransporter (pic) (Escherichia coli O44:H18 (strain 042 / EAEC)).